The following is a 278-amino-acid chain: MAHLGRLMVPLAALVLLLWAVPGAHGRRNNVRVLTDENWTSLLEGEWMIEFYAPWCPACQNLQPEWESFAEWGEDLEVKVAKVDVTEQTGLSGRFIITALPSIYHCKDGEFRRYVGPRTKKDFINFVSDKEWKNIEPISSWFGPSSVLMTMMSALFQLSVYIRTSHSYFVHDLGIPAWGSYLVFAFATVLSGLLLGLCMIFVADCLCPSKRRKPQQQYAKKTSPEFSQPLKKVEEEQEADEEDVSEEEAEDREGASKATSQSSIRQRCVGLPSATDTS.

The first 26 residues, 1-26 (MAHLGRLMVPLAALVLLLWAVPGAHG), serve as a signal peptide directing secretion. Residues 27–132 (RRNNVRVLTD…FINFVSDKEW (106 aa)) form the Thioredoxin domain. Over 27 to 181 (RRNNVRVLTD…DLGIPAWGSY (155 aa)) the chain is Extracellular. Residues Cys56 and Cys59 each act as nucleophile in the active site. Cysteines 56 and 59 form a disulfide. The helical transmembrane segment at 182–202 (LVFAFATVLSGLLLGLCMIFV) threads the bilayer. Topologically, residues 203–278 (ADCLCPSKRR…VGLPSATDTS (76 aa)) are cytoplasmic. Residues Cys205 and Cys207 are each lipidated (S-palmitoyl cysteine). Polar residues predominate over residues 217–226 (QYAKKTSPEF). The disordered stretch occupies residues 217–278 (QYAKKTSPEF…VGLPSATDTS (62 aa)). The segment covering 235-251 (EEQEADEEDVSEEEAED) has biased composition (acidic residues). 2 positions are modified to phosphoserine: Ser245 and Ser278.

Interacts with ATP2A2. In terms of processing, palmitoylated; palmitoylation is required for localization to mitochondria-associated endoplasmic reticulum membrane (MAM).

It is found in the endoplasmic reticulum membrane. The protein localises to the mitochondrion membrane. Its subcellular location is the secreted. The catalysed reaction is Catalyzes the rearrangement of -S-S- bonds in proteins.. Its function is as follows. Thiredoxin domain-containing protein that participates in various redox reactions through the reversible oxidation of its active center dithiol to a disulfide and catalyze dithiol-disulfide exchange reactions. Acts as a key inhibitor of the alternative triglyceride biosynthesis pathway by inhibiting the activity of TMEM68/DIESL at the endoplasmic reticulum, thereby restricting accumulation of triacylglycerol. The alternative triglyceride biosynthesis pathway mediates formation of triacylglycerol from diacylglycerol and membrane phospholipids. Acts as a protein disulfide isomerase by catalyzing formation or reduction of disulfide bonds. Specifically mediates formation of disulfide bonds of transmembrane proteins at the endoplasmic reticulum membrane. Involved in ER-associated degradation (ERAD) via its protein disulfide isomerase activity by acting on folding-defective polypeptides at the endoplasmic reticulum membrane. Acts as a negative regulator of platelet aggregation following secretion in the extracellular space. Acts as a regulator of endoplasmic reticulum-mitochondria contact sites via its ability to regulate redox signals. Regulates endoplasmic reticulum-mitochondria Ca(2+) flux. In Mus musculus (Mouse), this protein is Thioredoxin-related transmembrane protein 1.